A 358-amino-acid chain; its full sequence is Nicotinate-nucleotide--dimethylbenzimidazole phosphoribosyltransferase (358 aa).

Glu-323 (proton acceptor) is an active-site residue.

It belongs to the CobT family.

It catalyses the reaction 5,6-dimethylbenzimidazole + nicotinate beta-D-ribonucleotide = alpha-ribazole 5'-phosphate + nicotinate + H(+). Its pathway is nucleoside biosynthesis; alpha-ribazole biosynthesis; alpha-ribazole from 5,6-dimethylbenzimidazole: step 1/2. In terms of biological role, catalyzes the synthesis of alpha-ribazole-5'-phosphate from nicotinate mononucleotide (NAMN) and 5,6-dimethylbenzimidazole (DMB). In Oleidesulfovibrio alaskensis (strain ATCC BAA-1058 / DSM 17464 / G20) (Desulfovibrio alaskensis), this protein is Nicotinate-nucleotide--dimethylbenzimidazole phosphoribosyltransferase.